Here is an 869-residue protein sequence, read N- to C-terminus: Valine--tRNA ligase (869 aa).

The 'HIGH' region motif lies at 51-61 (PNVTGNLHLGH). A 'KMSKS' region motif is present at residues 523 to 527 (KMSKS). Lys-526 is a binding site for ATP. A coiled-coil region spans residues 797 to 869 (EDLLGSNNEA…ELEKLLSSHK (73 aa)).

It belongs to the class-I aminoacyl-tRNA synthetase family. ValS type 1 subfamily. In terms of assembly, monomer.

It is found in the cytoplasm. The enzyme catalyses tRNA(Val) + L-valine + ATP = L-valyl-tRNA(Val) + AMP + diphosphate. Its function is as follows. Catalyzes the attachment of valine to tRNA(Val). As ValRS can inadvertently accommodate and process structurally similar amino acids such as threonine, to avoid such errors, it has a 'posttransfer' editing activity that hydrolyzes mischarged Thr-tRNA(Val) in a tRNA-dependent manner. This chain is Valine--tRNA ligase, found in Malacoplasma penetrans (strain HF-2) (Mycoplasma penetrans).